Here is a 454-residue protein sequence, read N- to C-terminus: UDP-N-acetylmuramoylalanine--D-glutamate ligase (454 aa).

Position 119–125 (119–125 (GSNGKTT)) interacts with ATP.

This sequence belongs to the MurCDEF family.

It is found in the cytoplasm. It catalyses the reaction UDP-N-acetyl-alpha-D-muramoyl-L-alanine + D-glutamate + ATP = UDP-N-acetyl-alpha-D-muramoyl-L-alanyl-D-glutamate + ADP + phosphate + H(+). The protein operates within cell wall biogenesis; peptidoglycan biosynthesis. Its function is as follows. Cell wall formation. Catalyzes the addition of glutamate to the nucleotide precursor UDP-N-acetylmuramoyl-L-alanine (UMA). In Latilactobacillus sakei subsp. sakei (strain 23K) (Lactobacillus sakei subsp. sakei), this protein is UDP-N-acetylmuramoylalanine--D-glutamate ligase.